The primary structure comprises 309 residues: Malate dehydrogenase (309 aa).

NAD(+)-binding positions include 7 to 12 (GAGHVG) and Asp32. Substrate-binding residues include Arg81 and Arg87. Residues Asn94 and 117–119 (VSN) contribute to the NAD(+) site. The substrate site is built by Asn119 and Arg150. The active-site Proton acceptor is the His174.

Belongs to the LDH/MDH superfamily. MDH type 3 family.

It catalyses the reaction (S)-malate + NAD(+) = oxaloacetate + NADH + H(+). Catalyzes the reversible oxidation of malate to oxaloacetate. This Chlorobium phaeovibrioides (strain DSM 265 / 1930) (Prosthecochloris vibrioformis (strain DSM 265)) protein is Malate dehydrogenase.